A 595-amino-acid chain; its full sequence is MFASCHCAPRGRRTMKMIHFRSSSIKSLNQEMKCTIRLLDDSEVSCHIQRETKGQFLIEYICNYYSLLEKDYFGIRYVDPEKQRHWLEPNKSIFKQMKSHPPYTMCFRVKFYPHEPLKIKEELTRYLLYLQIKRDIFHGRLLCSFSDAAYLGACIVQAEFGDYYPDEHPENYISEFEIFPKQSQKLERKIMEIHNNELRGQSPAIAEFNLLLKAHTLETYGVDPHPCKDSRGATAFLGFTAAGFVVFQGNKRIHLRKWSDVCKLKFEGKTFYVIGSQKEKNAVLAFHTSTPAACKHLWKCGVENQAFYKYAKSSQIKTVSSSKIFFKGSRFRYSGKVAKEVVEASSKIQRDPPEVHRVNITQSRSFHSLNKQLIINMEPLQPLLPSPTEQEEEVPVGEGVPLPKMDVSEPLIASSPVKGAQCADPPDEEEDRVKEDPLTISELAYNPSASLLPTPVDDDEINMLFDCPSRLELEREDTDSFEELEADENAFLIAEEEELKEARQALSWSYSILTGHIWVNPLVKSFSRLLVVGLGLLLFVFPLLLLLLESGIDLSFLCEIRQTPEFEQFHYEYYCPLKEWVAGKVNIVLYMLGCS.

An FERM domain is found at 32-312 (MKCTIRLLDD…ENQAFYKYAK (281 aa)). Residues 529-549 (LLVVGLGLLLFVFPLLLLLLE) form a helical membrane-spanning segment.

The protein resides in the membrane. Putative tumor suppressor gene that may be implicated in the origin and progression of lung cancer. In Mus musculus (Mouse), this protein is FERM domain-containing protein 3 (Frmd3).